We begin with the raw amino-acid sequence, 156 residues long: MPRKGHVSKRDVLADPVYNSKLVTKLINHLMKDGKRAQASSILYDAFDIIKDKTGREPMDVFEEAMNNVKPVLEVKARRIGGSNYQVPVEVRPERQTTLALRWLVSYSRLRNEHTMDERLANELIDASNNTGSAVKKREDVHRMAEANRAFAHYRF.

Belongs to the universal ribosomal protein uS7 family. In terms of assembly, part of the 30S ribosomal subunit. Contacts proteins S9 and S11.

Functionally, one of the primary rRNA binding proteins, it binds directly to 16S rRNA where it nucleates assembly of the head domain of the 30S subunit. Is located at the subunit interface close to the decoding center, probably blocks exit of the E-site tRNA. In Lactobacillus delbrueckii subsp. bulgaricus (strain ATCC 11842 / DSM 20081 / BCRC 10696 / JCM 1002 / NBRC 13953 / NCIMB 11778 / NCTC 12712 / WDCM 00102 / Lb 14), this protein is Small ribosomal subunit protein uS7.